The following is a 153-amino-acid chain: Interleukin-4 (153 aa).

The N-terminal stretch at 1 to 24 (MGLTSQLLPPLFFLLACAGNFVHG) is a signal peptide. Intrachain disulfides connect cysteine 27–cysteine 151, cysteine 48–cysteine 89, and cysteine 70–cysteine 123. Residue asparagine 62 is glycosylated (N-linked (GlcNAc...) asparagine).

It belongs to the IL-4/IL-13 family. Interacts with IL4R. Interacts with IL13RA1.

It localises to the secreted. Functionally, cytokine secreted primarily by mast cells, T-cells, eosinophils, and basophils that plays a role in regulating antibody production, hematopoiesis and inflammation, and the development of effector T-cell responses. Induces the expression of class II MHC molecules on resting B-cells. Enhances both secretion and cell surface expression of IgE and IgG1. Also regulates the expression of the low affinity Fc receptor for IgE (CD23) on both lymphocytes and monocytes. Positively regulates IL31RA expression in macrophages. Stimulates autophagy in dendritic cells by interfering with mTORC1 signaling and through the induction of RUFY4. In addition, plays a critical role in higher functions of the normal brain, such as memory and learning. Upon binding to IL4, IL4R receptor dimerizes either with the common IL2R gamma chain/IL2RG to produce the type 1 signaling complex, located mainly on hematopoietic cells, or with the IL13RA1 to produce the type 2 complex, which is also expressed on nonhematopoietic cells. Engagement of both types of receptors initiates JAK3 and to a lower extend JAK1 phosphorylation leading to activation of the signal transducer and activator of transcription 6/STAT6. This chain is Interleukin-4 (IL4), found in Homo sapiens (Human).